We begin with the raw amino-acid sequence, 227 residues long: UPF0758 protein SSA_1218 (227 aa).

One can recognise an MPN domain in the interval 104 to 226 (QIMGSQKLAR…YYSYREETDM (123 aa)). Residues His175, His177, and Asp188 each contribute to the Zn(2+) site. The short motif at 175 to 188 (HNHPSGSVVPSRND) is the JAMM motif element.

It belongs to the UPF0758 family.

The chain is UPF0758 protein SSA_1218 from Streptococcus sanguinis (strain SK36).